Here is a 386-residue protein sequence, read N- to C-terminus: Succinate--CoA ligase [ADP-forming] subunit beta (386 aa).

One can recognise an ATP-grasp domain in the interval 9–244 (KALFREHGIP…ETQEDAREAR (236 aa)). Residues Lys-46, 53-55 (GRG), Glu-99, Thr-102, and Glu-107 contribute to the ATP site. Mg(2+)-binding residues include Asn-199 and Asp-213. Substrate-binding positions include Asn-264 and 321-323 (GIV).

This sequence belongs to the succinate/malate CoA ligase beta subunit family. In terms of assembly, heterotetramer of two alpha and two beta subunits. Mg(2+) is required as a cofactor.

It catalyses the reaction succinate + ATP + CoA = succinyl-CoA + ADP + phosphate. It carries out the reaction GTP + succinate + CoA = succinyl-CoA + GDP + phosphate. It functions in the pathway carbohydrate metabolism; tricarboxylic acid cycle; succinate from succinyl-CoA (ligase route): step 1/1. In terms of biological role, succinyl-CoA synthetase functions in the citric acid cycle (TCA), coupling the hydrolysis of succinyl-CoA to the synthesis of either ATP or GTP and thus represents the only step of substrate-level phosphorylation in the TCA. The beta subunit provides nucleotide specificity of the enzyme and binds the substrate succinate, while the binding sites for coenzyme A and phosphate are found in the alpha subunit. In Thioalkalivibrio sulfidiphilus (strain HL-EbGR7), this protein is Succinate--CoA ligase [ADP-forming] subunit beta.